An 89-amino-acid polypeptide reads, in one-letter code: Cell division topological specificity factor (89 aa).

This sequence belongs to the MinE family.

Functionally, prevents the cell division inhibition by proteins MinC and MinD at internal division sites while permitting inhibition at polar sites. This ensures cell division at the proper site by restricting the formation of a division septum at the midpoint of the long axis of the cell. In Klebsiella pneumoniae subsp. pneumoniae (strain ATCC 700721 / MGH 78578), this protein is Cell division topological specificity factor.